Here is a 283-residue protein sequence, read N- to C-terminus: Polyamine aminopropyltransferase (283 aa).

The region spanning 5–238 (TTWIDEYHKG…GIWSWTFASS (234 aa)) is the PABS domain. An S-methyl-5'-thioadenosine-binding site is contributed by Q32. Spermidine contacts are provided by H63 and D87. S-methyl-5'-thioadenosine-binding positions include E107 and 139–140 (DG). The active-site Proton acceptor is the D158. 158 to 161 (DSSD) serves as a coordination point for spermidine.

Belongs to the spermidine/spermine synthase family. In terms of assembly, homodimer or homotetramer.

The protein resides in the cytoplasm. The catalysed reaction is S-adenosyl 3-(methylsulfanyl)propylamine + putrescine = S-methyl-5'-thioadenosine + spermidine + H(+). It functions in the pathway amine and polyamine biosynthesis; spermidine biosynthesis; spermidine from putrescine: step 1/1. Its function is as follows. Catalyzes the irreversible transfer of a propylamine group from the amino donor S-adenosylmethioninamine (decarboxy-AdoMet) to putrescine (1,4-diaminobutane) to yield spermidine. The polypeptide is Polyamine aminopropyltransferase (Prochlorococcus marinus (strain MIT 9215)).